We begin with the raw amino-acid sequence, 138 residues long: Putative nickel-responsive regulator (138 aa).

Ni(2+)-binding residues include His-76, His-87, His-89, and Cys-95.

The protein belongs to the transcriptional regulatory CopG/NikR family. The cofactor is Ni(2+).

Functionally, transcriptional regulator. This chain is Putative nickel-responsive regulator, found in Pseudomonas putida (strain W619).